The chain runs to 209 residues: J domain-containing protein spf31 (209 aa).

The 66-residue stretch at 31–96 folds into the J domain; it reads NAYDVLDILP…KIRESLDSAY (66 aa). Disordered stretches follow at residues 149–175 and 187–209; these read ANQQREQARQDEIARERKRRVESEKVW and QDFLHKTKKNNLKKKNKKPRVLG. The span at 154–175 shows a compositional bias: basic and acidic residues; it reads EQARQDEIARERKRRVESEKVW. The segment covering 192–209 has biased composition (basic residues); the sequence is KTKKNNLKKKNKKPRVLG.

The protein is J domain-containing protein spf31 (spf31) of Schizosaccharomyces pombe (strain 972 / ATCC 24843) (Fission yeast).